A 187-amino-acid polypeptide reads, in one-letter code: Protein GrpE (187 aa).

Basic and acidic residues predominate over residues 1 to 11 (MTDSSNEHETE). Positions 1-21 (MTDSSNEHETENPSLPIPDNE) are disordered.

The protein belongs to the GrpE family. As to quaternary structure, homodimer.

The protein localises to the cytoplasm. In terms of biological role, participates actively in the response to hyperosmotic and heat shock by preventing the aggregation of stress-denatured proteins, in association with DnaK and GrpE. It is the nucleotide exchange factor for DnaK and may function as a thermosensor. Unfolded proteins bind initially to DnaJ; upon interaction with the DnaJ-bound protein, DnaK hydrolyzes its bound ATP, resulting in the formation of a stable complex. GrpE releases ADP from DnaK; ATP binding to DnaK triggers the release of the substrate protein, thus completing the reaction cycle. Several rounds of ATP-dependent interactions between DnaJ, DnaK and GrpE are required for fully efficient folding. The sequence is that of Protein GrpE from Chlamydia caviae (strain ATCC VR-813 / DSM 19441 / 03DC25 / GPIC) (Chlamydophila caviae).